Consider the following 131-residue polypeptide: Biogenesis of lysosome-related organelles complex 1 subunit 5 (131 aa).

This sequence belongs to the BLOC1S5 family. In terms of assembly, component of the biogenesis of lysosome-related organelles complex-1 (BLOC-1) composed at least of blos-1, blos-2, blos-4, dsbn-1, glo-2, mutd-1 and snpn-1.

Its function is as follows. Component of the biogenesis of lysosome-related organelles complex-1 (BLOC-1) involved in gut granule biogenesis. This is Biogenesis of lysosome-related organelles complex 1 subunit 5 (mutd-1) from Caenorhabditis elegans.